The chain runs to 1142 residues: Potassium channel subfamily T member 2 (1142 aa).

Residues 1-63 (MVDLESEVPP…KNQRSSLRIR (63 aa)) are Cytoplasmic-facing. A helical membrane pass occupies residues 64-84 (LFNFSLKLLSCLLYIIRVLLE). At 85–101 (KPSQGNDWSHIFWVNRS) the chain is on the extracellular side. N-linked (GlcNAc...) asparagine glycosylation occurs at asparagine 99. A helical transmembrane segment spans residues 102 to 122 (LPLWGLQVSVALISLFETILL). Residues 123–137 (GYLSYKGNIWEQILR) lie on the Cytoplasmic side of the membrane. The helical transmembrane segment at 138–158 (VPFILEIINAVPFIISIFWPT) threads the bilayer. Residues 159–160 (LR) are Extracellular-facing. Residues 161-173 (NLFVPVFLNCWLA) traverse the membrane as a helical segment. Residues 174–198 (KHALENMINDLHRAIQRTQSAMFNQ) are Cytoplasmic-facing. A helical transmembrane segment spans residues 199 to 219 (VLILISTLLCLIFTCICGIQH). At 220-228 (LERIGKKLN) the chain is on the extracellular side. An intramembrane region (pore-forming) is located at residues 229–249 (LFDSLYFCIVTFSTVGFGDVT). The Extracellular segment spans residues 250 to 256 (PETWSSK). Residues 257–277 (LFVVAMICVALVVLPIQFEQL) traverse the membrane as a helical segment. Residues 278 to 1142 (AYLWMERQKS…VQDSREETQL (865 aa)) are Cytoplasmic-facing. RCK N-terminal domains follow at residues 299–435 (EKHV…DHVV) and 725–865 (NKLI…CYSL). Disordered stretches follow at residues 989-1044 (DTKD…EKIT) and 1118-1142 (PNSEPSRKNSICNAAVQDSREETQL). The span at 1017–1037 (LRRKSMQWARRLSRKGPKHSG) shows a compositional bias: basic residues. Positions 1118 to 1129 (PNSEPSRKNSIC) are enriched in polar residues.

This sequence belongs to the potassium channel family. Calcium-activated (TC 1.A.1.3) subfamily. KCa4.2/KCNT2 sub-subfamily. Homotetramer. Forms heteromer with KCNT1; heteromeric channels differ from those of homomeric channels in their unitary conductance, kinetic behavior, subcellular localization, and response to activation of protein kinase C. Post-translationally, phosphorylated by protein kinase C. Phosphorylation of the C-terminal domain inhibits channel activity. Detected in brain, and at low levels in heart. Detected in brainstem, including auditory neurons such as the medial nucleus of the trapezoid body. Detected in the olfactory bulb, red nucleus, facial nucleus, pontine nucleus, oculomotor nucleus, substantia nigra, deep cerebellar nuclei, vestibular nucleus, and the thalamus. Detected in hippocampal CA1, CA2, and CA3 regions, the dentate gyrus, supraoptic nucleus, hypothalamus, dorsal root ganglion, and cortical layers II, III, and V. Detected in striatum cholinergic interneurons.

It localises to the cell membrane. It catalyses the reaction K(+)(in) = K(+)(out). Are normally in a closed state unless activated by an increase in intracellular Na(+) and Cl(-). Inhibited upon stimulation of G-protein coupled receptors, such as CHRM1 and GRM1. There is conflicting data about the effect of ATP on KNCT2 channels activity. Intracellular ATP was initially report to inhibit the channel activity. However, others studies conclude that KNCT2 channels are not inhibited by intracellular ATP. Sodium-activated and chloride-activated potassium channel. Produces rapidly activating outward rectifier K(+) currents. Contributes to regulate neuronal excitability. In Rattus norvegicus (Rat), this protein is Potassium channel subfamily T member 2 (Kcnt2).